We begin with the raw amino-acid sequence, 196 residues long: Putative NADH dehydrogenase/NAD(P)H nitroreductase Pnuc_0932 (196 aa).

It belongs to the nitroreductase family. HadB/RutE subfamily. It depends on FMN as a cofactor.

The sequence is that of Putative NADH dehydrogenase/NAD(P)H nitroreductase Pnuc_0932 from Polynucleobacter asymbioticus (strain DSM 18221 / CIP 109841 / QLW-P1DMWA-1) (Polynucleobacter necessarius subsp. asymbioticus).